The primary structure comprises 1005 residues: Pikachurin (1005 aa).

Positions 1–24 are cleaved as a signal peptide; sequence MDLISTFLLHFLLLACSLPPGAVS. Fibronectin type-III domains are found at residues 37 to 136 and 144 to 239; these read PPLD…TLSQ and APHQ…TLGP. N-linked (GlcNAc...) asparagine glycosylation occurs at asparagine 47. The disordered stretch occupies residues 281–328; it reads PATKVGNKKSKKTSVSNSEMDSRLAQPTSASLPETTVAVPPTPAQRKG. The span at 305–314 shows a compositional bias: polar residues; it reads AQPTSASLPE. The EGF-like 1 domain occupies 339–377; sequence FDMSCDETLCSADSFCVNDYAWGGSRCHCNLGKGGEACS. Cystine bridges form between cysteine 343–cysteine 354, cysteine 348–cysteine 365, cysteine 367–cysteine 376, cysteine 530–cysteine 560, cysteine 565–cysteine 576, cysteine 570–cysteine 586, cysteine 588–cysteine 597, cysteine 784–cysteine 795, cysteine 789–cysteine 804, cysteine 806–cysteine 815, and cysteine 975–cysteine 1002. A Laminin G-like 1 domain is found at 382-560; it reads IQYPQFFGHS…ALNGADVGEC (179 aa). EGF-like domains lie at 561–598 and 780–816; these read SSGICDEASCINGGTCAAIKADSYICLCPLGFRGRHCE and AAHPCVGAPCAHGGSCRPRKEGYECDCPLGFEGLNCQ. In terms of domain architecture, Laminin G-like 2 spans 605-784; the sequence is IPQFRESLRS…VNVENAAHPC (180 aa). In terms of domain architecture, Laminin G-like 3 spans 823–1002; it reads IEIPQFIGRS…AVDGKNINTC (180 aa).

As to quaternary structure, interacts with DAG1 alpha-dystroglycan. Interacts with GPR158 and GPR179; transsynaptic interaction is required for synaptic organization of photoreceptor cells. O-glycosylated; contains chondroitin sulfate and heparan sulfate.

It is found in the secreted. It localises to the extracellular space. Its subcellular location is the extracellular matrix. The protein localises to the synaptic cleft. The protein resides in the presynaptic active zone. Functionally, involved in both the retinal photoreceptor ribbon synapse formation and physiological functions of visual perception. Plays a key role in the synaptic organization of photoreceptors by mediating transsynaptic interaction between alpha-dystroglycan and GPR179 on the postsynaptic membrane. Necessary for proper bipolar dendritic tip apposition to the photoreceptor ribbon synapse. Promotes matrix assembly and cell adhesiveness. The sequence is that of Pikachurin (Egflam) from Rattus norvegicus (Rat).